The chain runs to 578 residues: Arginine--tRNA ligase (578 aa).

A 'HIGH' region motif is present at residues 122 to 132 (PNVAKEMHVGH).

Belongs to the class-I aminoacyl-tRNA synthetase family. As to quaternary structure, monomer.

It is found in the cytoplasm. It carries out the reaction tRNA(Arg) + L-arginine + ATP = L-arginyl-tRNA(Arg) + AMP + diphosphate. The sequence is that of Arginine--tRNA ligase from Shigella sonnei (strain Ss046).